Reading from the N-terminus, the 2185-residue chain is Genome polyprotein (2185 aa).

The N-myristoyl glycine; by host moiety is linked to residue Gly2. The Cytoplasmic segment spans residues 2-1495 (GAQVSTQKTG…HVSRAFICLQ (1494 aa)). The tract at residues 568–584 (FFQGPVEDAITAAIGRV) is amphipathic alpha-helix. Active-site for protease 2A activity residues include His872 and Asp890. Zn(2+)-binding residues include Cys907 and Cys909. The active-site For protease 2A activity is the Cys961. 2 residues coordinate Zn(2+): Cys967 and His969. Residues 1101–1173 (NNGWLKKFTE…EQSAPSQSDQ (73 aa)) are membrane-binding. Residues 1101 to 1239 (NNGWLKKFTE…SPGAGKSVAT (139 aa)) form an oligomerization region. Residues 1122–1126 (AIKIQ) form an RNA-binding region. The SF3 helicase domain occupies 1205–1361 (EKKMSNYIQF…SMYSQNGKIN (157 aa)). Zn(2+) is bound by residues Cys1369, Cys1381, and Cys1386. The segment at 1369-1386 (CDEECCPVNFKKCCPLVC) adopts a C4-type; degenerate zinc-finger fold. Residues 1413 to 1420 (EYNHRHSV) are RNA-binding. Positions 1424–1429 (LEALFQ) are oligomerization. An intramembrane segment occupies 1496-1511 (AITTFVSVAGIIYIIY). Residues 1512-2185 (KLFAGFQGAY…TIRRKWLDSF (674 aa)) are Cytoplasmic-facing. Tyr1521 bears the O-(5'-phospho-RNA)-tyrosine mark. The region spanning 1541 to 1719 (GPAFEFAVAM…FSAALLKHYF (179 aa)) is the Peptidase C3 domain. Active-site for protease 3C activity residues include His1580, Glu1611, and Cys1687. One can recognise a RdRp catalytic domain in the interval 1950–2066 (GHLIAFDYSG…SYPWPIDASL (117 aa)). 2 residues coordinate Mg(2+): Asp1956 and Asp2052.

It belongs to the picornaviruses polyprotein family. In terms of assembly, interacts with capsid protein VP1 and capsid protein VP3 to form heterotrimeric protomers. Interacts with capsid protein VP0, and capsid protein VP3 to form heterotrimeric protomers. Five protomers subsequently associate to form pentamers which serve as building blocks for the capsid. Interacts with capsid protein VP2, capsid protein VP3 and capsid protein VP4 following cleavage of capsid protein VP0. Interacts with host CD55. Interacts with host CXADR. As to quaternary structure, interacts with capsid protein VP1 and capsid protein VP3 in the mature capsid. In terms of assembly, interacts with capsid protein VP0 and capsid protein VP1 to form heterotrimeric protomers. Five protomers subsequently associate to form pentamers which serve as building blocks for the capsid. Interacts with capsid protein VP4 in the mature capsid. Interacts with protein 2C; this interaction may be important for virion morphogenesis. Interacts with capsid protein VP1 and capsid protein VP3. As to quaternary structure, homodimer. In terms of assembly, homohexamer; forms a hexameric ring structure with 6-fold symmetry characteristic of AAA+ ATPases. Interacts (via N-terminus) with host RTN3 (via reticulon domain); this interaction is important for viral replication. Interacts with capsid protein VP3; this interaction may be important for virion morphogenesis. Interacts with protein 3CD. As to quaternary structure, homodimer. Interacts with host GBF1. Interacts (via GOLD domain) with host ACBD3 (via GOLD domain); this interaction allows the formation of a viral protein 3A/ACBD3 heterotetramer with a 2:2 stoichiometry, which will stimulate the recruitment of host PI4KB in order to synthesize PI4P at the viral RNA replication sites. In terms of assembly, interacts with RNA-directed RNA polymerase. Interacts with host TICAM1 (via C-terminus). As to quaternary structure, interacts with protein 3AB and with RNA-directed RNA polymerase. In terms of assembly, interacts with Viral protein genome-linked and with protein 3CD. It depends on Mg(2+) as a cofactor. Post-translationally, specific enzymatic cleavages in vivo by the viral proteases yield processing intermediates and the mature proteins. Myristoylation is required for the formation of pentamers during virus assembly. Further assembly of 12 pentamers and a molecule of genomic RNA generates the provirion. In terms of processing, during virion maturation, immature virions are rendered infectious following cleavage of VP0 into VP4 and VP2. This maturation seems to be an autocatalytic event triggered by the presence of RNA in the capsid and it is followed by a conformational change infectious virion. Post-translationally, myristoylation is required during RNA encapsidation and formation of the mature virus particle. VPg is uridylylated by the polymerase into VPg-pUpU. This acts as a nucleotide-peptide primer for the genomic RNA replication.

The protein localises to the virion. It is found in the host cytoplasm. The protein resides in the host cytoplasmic vesicle membrane. It localises to the host nucleus. It carries out the reaction a ribonucleoside 5'-triphosphate + H2O = a ribonucleoside 5'-diphosphate + phosphate + H(+). It catalyses the reaction Selective cleavage of Tyr-|-Gly bond in the picornavirus polyprotein.. The enzyme catalyses RNA(n) + a ribonucleoside 5'-triphosphate = RNA(n+1) + diphosphate. The catalysed reaction is Selective cleavage of Gln-|-Gly bond in the poliovirus polyprotein. In other picornavirus reactions Glu may be substituted for Gln, and Ser or Thr for Gly.. Replication or transcription is subject to high level of random mutations by the nucleotide analog ribavirin. Forms an icosahedral capsid of pseudo T=3 symmetry with capsid proteins VP2 and VP3. The capsid is 300 Angstroms in diameter, composed of 60 copies of each capsid protein and enclosing the viral positive strand RNA genome. Capsid protein VP1 mainly forms the vertices of the capsid. Capsid protein VP1 interacts with host cell receptors CD55 and CXADR to provide virion attachment to target host cells. This attachment induces virion internalization. Tyrosine kinases are probably involved in the entry process. After binding to its receptor, the capsid undergoes conformational changes. Capsid protein VP1 N-terminus (that contains an amphipathic alpha-helix) and capsid protein VP4 are externalized. Together, they shape a pore in the host membrane through which viral genome is translocated to host cell cytoplasm. In terms of biological role, forms an icosahedral capsid of pseudo T=3 symmetry with capsid proteins VP2 and VP3. The capsid is 300 Angstroms in diameter, composed of 60 copies of each capsid protein and enclosing the viral positive strand RNA genome. Functionally, lies on the inner surface of the capsid shell. After binding to the host receptor, the capsid undergoes conformational changes. Capsid protein VP4 is released, Capsid protein VP1 N-terminus is externalized, and together, they shape a pore in the host membrane through which the viral genome is translocated into the host cell cytoplasm. Its function is as follows. Component of immature procapsids, which is cleaved into capsid proteins VP4 and VP2 after maturation. Allows the capsid to remain inactive before the maturation step. Cysteine protease that cleaves viral polyprotein and specific host proteins. It is responsible for the autocatalytic cleavage between the P1 and P2 regions, which is the first cleavage occurring in the polyprotein. Also cleaves the host translation initiation factor EIF4G1, in order to shut down the capped cellular mRNA translation. Inhibits the host nucleus-cytoplasm protein and RNA trafficking by cleaving host members of the nuclear pores. Counteracts stress granule formation probably by antagonizing its assembly or promoting its dissassembly. Cleaves and inhibits host IFIH1/MDA5, thereby inhibiting the type-I IFN production and the establishment of the antiviral state. Cleaves and inhibits host MAVS, thereby inhibiting the type-I IFN production and the establishment of the antiviral state. In terms of biological role, plays an essential role in the virus replication cycle by acting as a viroporin. Creates a pore in the host endoplasmic reticulum and as a consequence releases Ca2+ in the cytoplasm of infected cell. In turn, high levels of cytoplasmic calcium may trigger membrane trafficking and transport of viral ER-associated proteins to viroplasms, sites of viral genome replication. Functionally, induces and associates with structural rearrangements of intracellular membranes. Displays RNA-binding, nucleotide binding and NTPase activities. May play a role in virion morphogenesis and viral RNA encapsidation by interacting with the capsid protein VP3. Its function is as follows. Localizes the viral replication complex to the surface of membranous vesicles. Together with protein 3CD binds the Cis-Active RNA Element (CRE) which is involved in RNA synthesis initiation. Acts as a cofactor to stimulate the activity of 3D polymerase, maybe through a nucleid acid chaperone activity. Localizes the viral replication complex to the surface of membranous vesicles. It inhibits host cell endoplasmic reticulum-to-Golgi apparatus transport and causes the disassembly of the Golgi complex, possibly through GBF1 interaction. This would result in depletion of MHC, trail receptors and IFN receptors at the host cell surface. Plays an essential role in viral RNA replication by recruiting ACBD3 and PI4KB at the viral replication sites, thereby allowing the formation of the rearranged membranous structures where viral replication takes place. In terms of biological role, acts as a primer for viral RNA replication and remains covalently bound to viral genomic RNA. VPg is uridylylated prior to priming replication into VPg-pUpU. The oriI viral genomic sequence may act as a template for this. The VPg-pUpU is then used as primer on the genomic RNA poly(A) by the RNA-dependent RNA polymerase to replicate the viral genome. During genome replication, the VPg-RNA linkage is removed by the host TDP2, thereby accelerating replication. During the late stage of the replication cycle, host TDP2 is excluded from sites of viral RNA synthesis and encapsidation, allowing for the generation of progeny virions. Functionally, involved in the viral replication complex and viral polypeptide maturation. It exhibits protease activity with a specificity and catalytic efficiency that is different from protease 3C. Protein 3CD lacks polymerase activity. Protein 3CD binds to the 5'UTR of the viral genome. Its function is as follows. Major viral protease that mediates proteolytic processing of the polyprotein. Cleaves host EIF5B, contributing to host translation shutoff. Also cleaves host PABPC1, contributing to host translation shutoff. Cleaves and inhibits host RIGI, thereby inhibiting the type-I IFN production and the establishment of the antiviral state. Cleaves and inhibits host MAVS, thereby inhibiting the type-I IFN production and the establishment of the antiviral state. Cleaves and inhibits host TICAM1/TRIF, thereby inhibiting the type-I IFN production. Cleaves host NLRP1, triggers host N-glycine-mediated degradation of the autoinhibitory NLRP1 N-terminal fragment. Replicates the viral genomic RNA on the surface of intracellular membranes. May form linear arrays of subunits that propagate along a strong head-to-tail interaction called interface-I. Covalently attaches UMP to a tyrosine of VPg, which is used to prime RNA synthesis. The positive stranded RNA genome is first replicated at virus induced membranous vesicles, creating a dsRNA genomic replication form. This dsRNA is then used as template to synthesize positive stranded RNA genomes. ss(+)RNA genomes are either translated, replicated or encapsidated. In Homo sapiens (Human), this protein is Genome polyprotein.